A 228-amino-acid chain; its full sequence is MPLFETIKHTYKHLWSDASTASFRKYPSPERPDILSIDILSKEIDPTTGVLKCTKLIICKGNTPSWLKSILGSGECLFYEETTVDPKNKIMTLKTKNLNFTNILGVDEVCTYEQHPDNEEWTLFTQEATVTSSIFGVARKMEAFCLDRFVANAGKGRKIMEDTIIKVQKEAEESLASFDKTFTSIKHEAEQSFEKAFSTAEDILPIIKLDDKQSQTTQNTQSNNNKKK.

The 172-residue stretch at 1–172 (MPLFETIKHT…TIIKVQKEAE (172 aa)) folds into the PRELI/MSF1 domain.

It belongs to the slowmo family.

The protein is Protein slowmo homolog (slmo) of Dictyostelium discoideum (Social amoeba).